The following is a 390-amino-acid chain: Transforming growth factor beta-1 proprotein (390 aa).

The N-terminal stretch at 1–29 is a signal peptide; sequence MPPSGLRLLPLLLPLLWLLMLTPGRPVAG. The segment at 30–74 is straightjacket domain; the sequence is LSTCKTIDMELVKRKRIEAIRGQILSKLRLASPPSQGDVPPGPLP. The tract at residues 75-271 is arm domain; sequence EAILALYNST…ATPLERAQHL (197 aa). N-linked (GlcNAc...) asparagine glycans are attached at residues asparagine 82, asparagine 136, and asparagine 176. The interval 226 to 252 is bowtie tail; the sequence is DSKDNTLQVDINGFSSGRRGDLATIHG. Positions 244–246 match the Cell attachment site motif; sequence RGD. 4 disulfides stabilise this stretch: cysteine 285/cysteine 294, cysteine 293/cysteine 356, cysteine 322/cysteine 387, and cysteine 326/cysteine 389.

The protein belongs to the TGF-beta family. Homodimer; disulfide-linked. Interacts with the serine proteases, HTRA1 and HTRA3: the interaction with either inhibits TGFB1-mediated signaling and the HTRA protease activity is required for this inhibition. May interact with THSD4; this interaction may lead to sequestration by FBN1 microfibril assembly and attenuation of TGFB signaling. Interacts with CD109, DPT and ASPN. Interacts with EFEMP2. Interacts with TSKU; the interaction contributes to regulation of the hair cycle. Interacts with TGFBR3. In terms of assembly, homodimer; disulfide-linked. Interacts with transforming growth factor beta-1 (TGF-beta-1) chain; interaction is non-covalent and maintains TGF-beta-1 in a latent state; each latency-associated peptide (LAP) monomer interacts with TGF-beta-1 in the other monomer. Interacts with LTBP1; leading to regulation of TGF-beta-1 activation. Interacts with LRRC32/GARP; leading to regulation of TGF-beta-1 activation on the surface of activated regulatory T-cells (Tregs). Interacts with LRRC33/NRROS; leading to regulation of TGF-beta-1 activation in macrophages and microglia. Interacts (via cell attachment site) with integrins ITGAV and ITGB6 (ITGAV:ITGB6), leading to release of the active TGF-beta-1. Interacts with NREP; the interaction results in a decrease in TGFB1 autoinduction. Interacts with HSP90AB1; inhibits latent TGFB1 activation. As to quaternary structure, homodimer; disulfide-linked. Interacts with TGF-beta receptors (TGFBR1 and TGFBR2), leading to signal transduction. Interacts with EFEMP2. Transforming growth factor beta-1 proprotein: The precursor proprotein is cleaved in the Golgi apparatus by FURIN to form Transforming growth factor beta-1 (TGF-beta-1) and Latency-associated peptide (LAP) chains, which remain non-covalently linked, rendering TGF-beta-1 inactive. Post-translationally, N-glycosylated. Deglycosylation leads to activation of Transforming growth factor beta-1 (TGF-beta-1); mechanisms triggering deglycosylation-driven activation of TGF-beta-1 are however unclear.

It is found in the secreted. Its subcellular location is the extracellular space. It localises to the extracellular matrix. Functionally, transforming growth factor beta-1 proprotein: Precursor of the Latency-associated peptide (LAP) and Transforming growth factor beta-1 (TGF-beta-1) chains, which constitute the regulatory and active subunit of TGF-beta-1, respectively. Its function is as follows. Required to maintain the Transforming growth factor beta-1 (TGF-beta-1) chain in a latent state during storage in extracellular matrix. Associates non-covalently with TGF-beta-1 and regulates its activation via interaction with 'milieu molecules', such as LTBP1, LRRC32/GARP and LRRC33/NRROS, that control activation of TGF-beta-1. Interaction with LRRC33/NRROS regulates activation of TGF-beta-1 in macrophages and microglia. Interaction with LRRC32/GARP controls activation of TGF-beta-1 on the surface of activated regulatory T-cells (Tregs). Interaction with integrins (ITGAV:ITGB6 or ITGAV:ITGB8) results in distortion of the Latency-associated peptide chain and subsequent release of the active TGF-beta-1. Multifunctional protein that regulates the growth and differentiation of various cell types and is involved in various processes, such as normal development, immune function, microglia function and responses to neurodegeneration. Activation into mature form follows different steps: following cleavage of the proprotein in the Golgi apparatus, Latency-associated peptide (LAP) and Transforming growth factor beta-1 (TGF-beta-1) chains remain non-covalently linked rendering TGF-beta-1 inactive during storage in extracellular matrix. At the same time, LAP chain interacts with 'milieu molecules', such as LTBP1, LRRC32/GARP and LRRC33/NRROS that control activation of TGF-beta-1 and maintain it in a latent state during storage in extracellular milieus. TGF-beta-1 is released from LAP by integrins (ITGAV:ITGB6 or ITGAV:ITGB8): integrin-binding to LAP stabilizes an alternative conformation of the LAP bowtie tail and results in distortion of the LAP chain and subsequent release of the active TGF-beta-1. Once activated following release of LAP, TGF-beta-1 acts by binding to TGF-beta receptors (TGFBR1 and TGFBR2), which transduce signal. While expressed by many cells types, TGF-beta-1 only has a very localized range of action within cell environment thanks to fine regulation of its activation by Latency-associated peptide chain (LAP) and 'milieu molecules'. Plays an important role in bone remodeling: acts as a potent stimulator of osteoblastic bone formation, causing chemotaxis, proliferation and differentiation in committed osteoblasts. Can promote either T-helper 17 cells (Th17) or regulatory T-cells (Treg) lineage differentiation in a concentration-dependent manner. At high concentrations, leads to FOXP3-mediated suppression of RORC and down-regulation of IL-17 expression, favoring Treg cell development. At low concentrations in concert with IL-6 and IL-21, leads to expression of the IL-17 and IL-23 receptors, favoring differentiation to Th17 cells. Stimulates sustained production of collagen through the activation of CREB3L1 by regulated intramembrane proteolysis (RIP). Mediates SMAD2/3 activation by inducing its phosphorylation and subsequent translocation to the nucleus. Positively regulates odontoblastic differentiation in dental papilla cells, via promotion of IPO7-mediated translocation of phosphorylated SMAD2 to the nucleus and subsequent transcription of target genes. Can induce epithelial-to-mesenchymal transition (EMT) and cell migration in various cell types. This chain is Transforming growth factor beta-1 proprotein (TGFB1), found in Bos taurus (Bovine).